The sequence spans 421 residues: Polymerase delta-interacting protein 3 (421 aa).

Alanine 2 is modified (N-acetylalanine). Serine 5 bears the Phosphoserine mark. Residue arginine 33 is modified to Omega-N-methylarginine. Residues serine 44 and serine 127 each carry the phosphoserine modification. Residue threonine 140 is modified to Phosphothreonine. A Glycyl lysine isopeptide (Lys-Gly) (interchain with G-Cter in SUMO2) cross-link involves residue lysine 200. Phosphoserine is present on residues serine 204, serine 215, and serine 217. A Glycyl lysine isopeptide (Lys-Gly) (interchain with G-Cter in SUMO2) cross-link involves residue lysine 223. Serine 244 carries the post-translational modification Phosphoserine. Lysine 248 participates in a covalent cross-link: Glycyl lysine isopeptide (Lys-Gly) (interchain with G-Cter in SUMO2). Serine 275 carries the post-translational modification Phosphoserine. Residues 280 to 351 (TKMTVNNLHP…QPMKCNLHMN (72 aa)) enclose the RRM domain. The span at 370–379 (SMKKESELPR) shows a compositional bias: basic and acidic residues. Residues 370–393 (SMKKESELPRRVNSASSSNPPAEV) are disordered. Lysine 372 is covalently cross-linked (Glycyl lysine isopeptide (Lys-Gly) (interchain with G-Cter in SUMO2)). Residues serine 383 and serine 385 each carry the phosphoserine; by RPS6KB1 modification. Lysine 418 participates in a covalent cross-link: Glycyl lysine isopeptide (Lys-Gly) (interchain with G-Cter in SUMO2).

Interacts with POLD2. Interacts with NCBP1 and EIF4A3. Associates with the multiprotein exon junction complex (EJC). Interacts with RPS6KB1 (activated). Interacts with ERH. Interacts with THOC2, DDX39B and ZC3H11A; the interactions are ATP-dependent and indicative for an association with the TREX complex. Post-translationally, phosphorylated at Ser-383 and Ser-385 by RPS6KB1.

It localises to the nucleus. It is found in the nucleus speckle. The protein resides in the cytoplasm. Is involved in regulation of translation. Is preferentially associated with CBC-bound spliced mRNA-protein complexes during the pioneer round of mRNA translation. Contributes to enhanced translational efficiency of spliced over nonspliced mRNAs. Recruits activated ribosomal protein S6 kinase beta-1 I/RPS6KB1 to newly synthesized mRNA. Involved in nuclear mRNA export; probably mediated by association with the TREX complex. This chain is Polymerase delta-interacting protein 3 (POLDIP3), found in Homo sapiens (Human).